The chain runs to 202 residues: Probable septum site-determining protein MinC (202 aa).

Belongs to the MinC family. In terms of assembly, interacts with MinD and FtsZ.

Its function is as follows. Cell division inhibitor that blocks the formation of polar Z ring septums. Rapidly oscillates between the poles of the cell to destabilize FtsZ filaments that have formed before they mature into polar Z rings. Prevents FtsZ polymerization. This is Probable septum site-determining protein MinC from Sulfurihydrogenibium sp. (strain YO3AOP1).